The chain runs to 425 residues: Formyl-CoA:oxalate CoA-transferase (425 aa).

CoA-binding positions include 17–18 (QS), Arg38, 72–75 (LDTK), 96–98 (NFG), Arg104, and 136–139 (KVYE). Asp168 serves as the catalytic Nucleophile. 247–249 (GGQ) serves as a coordination point for substrate.

Belongs to the CoA-transferase III family. Frc subfamily. As to quaternary structure, homodimer.

It catalyses the reaction formyl-CoA + oxalate = oxalyl-CoA + formate. The protein operates within metabolic intermediate degradation; oxalate degradation; CO(2) and formate from oxalate: step 1/2. Functionally, involved in the catabolism of oxalate and in the adapatation to low pH via the induction of the oxalate-dependent acid tolerance response (ATR). Catalyzes the transfer of the CoA moiety from formyl-CoA to oxalate. This Bradyrhizobium sp. (strain ORS 278) protein is Formyl-CoA:oxalate CoA-transferase.